The chain runs to 280 residues: Nucleotide-binding protein Mfla_0145 (280 aa).

8-15 (GLSGSGKS) contributes to the ATP binding site. Residue 57–60 (DTRS) coordinates GTP.

The protein belongs to the RapZ-like family.

Functionally, displays ATPase and GTPase activities. The protein is Nucleotide-binding protein Mfla_0145 of Methylobacillus flagellatus (strain ATCC 51484 / DSM 6875 / VKM B-1610 / KT).